A 483-amino-acid polypeptide reads, in one-letter code: Isocitrate dehydrogenase [NADP] (483 aa).

Threonine 74 is a binding site for NADP(+). D-threo-isocitrate-binding residues include serine 83, asparagine 85, arginine 89, arginine 99, and arginine 121. Position 232 (aspartate 232) interacts with Mg(2+). NADP(+) is bound by residues histidine 264–isoleucine 270 and asparagine 277.

Belongs to the isocitrate and isopropylmalate dehydrogenases family. Homodimer. Mg(2+) serves as cofactor. Requires Mn(2+) as cofactor.

It catalyses the reaction D-threo-isocitrate + NADP(+) = 2-oxoglutarate + CO2 + NADPH. Functionally, catalyzes the oxidative decarboxylation of isocitrate to 2-oxoglutarate and carbon dioxide with the concomitant reduction of NADP(+). This is Isocitrate dehydrogenase [NADP] (icd) from Rickettsia typhi (strain ATCC VR-144 / Wilmington).